Reading from the N-terminus, the 187-residue chain is UPF0301 protein YqgE (187 aa).

The protein belongs to the UPF0301 (AlgH) family.

This Salmonella agona (strain SL483) protein is UPF0301 protein YqgE.